A 294-amino-acid chain; its full sequence is MASKITAAQVKELRDKTQVGMMDAKKALVASEGDMDKAIDFLREKGIAKAKKKSGNVAANGLARVKEDGNTAAIIEVNSETDFVATNDTFNALVDTIADTIAEKQPADLDAALALTTADGSTINDAIVKTTQVTSENVQLRRFAVVKKTDGQVFGSYLHQGGQIAAVVVLDGADEATAKDVAMHVAAINPEFVSRDDIPAERLDHEREVLKQEALNEGKPEKIVEKMVEGRLHKFLSEISLADQPFVKDGDQTVSQFVASKGGKLVTFVRYEVGEGIEKPVADLAKEVQDQING.

Residues 81-84 (TDFV) form an involved in Mg(2+) ion dislocation from EF-Tu region.

The protein belongs to the EF-Ts family.

It localises to the cytoplasm. Its function is as follows. Associates with the EF-Tu.GDP complex and induces the exchange of GDP to GTP. It remains bound to the aminoacyl-tRNA.EF-Tu.GTP complex up to the GTP hydrolysis stage on the ribosome. This chain is Elongation factor Ts, found in Levilactobacillus brevis (strain ATCC 367 / BCRC 12310 / CIP 105137 / JCM 1170 / LMG 11437 / NCIMB 947 / NCTC 947) (Lactobacillus brevis).